Here is a 370-residue protein sequence, read N- to C-terminus: 3-dehydroquinate synthase (370 aa).

NAD(+)-binding positions include 108 to 112 (GVIGD), 132 to 133 (TT), Lys-145, and Lys-154. Zn(2+) contacts are provided by Glu-187, His-249, and His-267.

Belongs to the sugar phosphate cyclases superfamily. Dehydroquinate synthase family. Co(2+) is required as a cofactor. Zn(2+) serves as cofactor. Requires NAD(+) as cofactor.

It is found in the cytoplasm. It carries out the reaction 7-phospho-2-dehydro-3-deoxy-D-arabino-heptonate = 3-dehydroquinate + phosphate. It participates in metabolic intermediate biosynthesis; chorismate biosynthesis; chorismate from D-erythrose 4-phosphate and phosphoenolpyruvate: step 2/7. In terms of biological role, catalyzes the conversion of 3-deoxy-D-arabino-heptulosonate 7-phosphate (DAHP) to dehydroquinate (DHQ). In Cereibacter sphaeroides (strain ATCC 17025 / ATH 2.4.3) (Rhodobacter sphaeroides), this protein is 3-dehydroquinate synthase.